Consider the following 506-residue polypeptide: DNA polymerase type-X family protein pol4 (506 aa).

The BRCT domain occupies 1 to 98 (MKILASSTNY…TPGNPYVIWH (98 aa)). Positions 106–150 (GSPYTPSTRPASHTEAPNDFENHETPNTENNNEVKSIDNVDQEGS) are disordered. The interval 348–357 (RGKPVGADVD) is involved in ssDNA binding. Mg(2+) contacts are provided by Asp355, Asp357, and Asp419.

Belongs to the DNA polymerase type-X family. Requires Mg(2+) as cofactor.

The protein resides in the cytoplasm. It is found in the nucleus. It catalyses the reaction DNA(n) + a 2'-deoxyribonucleoside 5'-triphosphate = DNA(n+1) + diphosphate. Repair polymerase. Involved in gap-filling in DNA non-homologous end joining (NHEJ) required for double-strand break repair. Can incorporate a ribonucleotide (rNTP) into a primer DNA. This is DNA polymerase type-X family protein pol4 (pol4) from Schizosaccharomyces pombe (strain 972 / ATCC 24843) (Fission yeast).